A 413-amino-acid chain; its full sequence is Chloramphenicol efflux pump Rv0191 (413 aa).

12 consecutive transmembrane segments (helical) span residues 23–43 (LSVL…PVGA), 55–75 (VVLV…TTVP), 89–109 (LVVS…APNF), 110–130 (AVLA…WAVI), 150–170 (IYIG…AMSL), 176–196 (LAAV…RLAL), 226–246 (VLTM…VVII), 256–276 (NLAW…PLVA), 286–306 (AVIV…ALAF), 312–332 (AATA…ATAV), 353–373 (GLYV…GGLL), and 378–398 (LAMM…GMTV).

This sequence belongs to the major facilitator superfamily.

The protein localises to the cell membrane. With respect to regulation, inhibited by the drug efflux pump inhibitors verapamil, resperine, piperine, chlorpromazine and carbonyl cyanide m-chlorophenylhydrazone (CCCP). Its function is as follows. Active efflux pump that plays an important role in chloramphenicol resistance. Overexpression causes pyrazinamide resistance. The sequence is that of Chloramphenicol efflux pump Rv0191 from Mycobacterium tuberculosis (strain ATCC 25618 / H37Rv).